The following is a 497-amino-acid chain: Sestrin homolog (497 aa).

S185 and S190 each carry phosphoserine. A compositionally biased stretch (polar residues) spans 226–241 (NANPDYDSQTAASSNG). The interval 226 to 255 (NANPDYDSQTAASSNGGAPPDSANAVADGP) is disordered.

It belongs to the sestrin family. In terms of assembly, associates with the GATOR2 complex; the interaction is probably direct. Associates with the GATOR1 complex; the interaction is probably indirect and mediated by the GATOR2 complex. In terms of tissue distribution, highly expressed in muscle-enriched tissues (at protein level).

Its subcellular location is the nucleus. It is found in the cytoplasm. Functions as a negative feedback regulator of mTOR function. This Drosophila melanogaster (Fruit fly) protein is Sestrin homolog.